We begin with the raw amino-acid sequence, 954 residues long: Glucosidase 2 subunit alpha (954 aa).

An N-terminal signal peptide occupies residues 1–22; sequence MVLLKWLVCQLVFFTAFSHAFT. N-linked (GlcNAc...) asparagine glycosylation is found at N114, N126, N142, N173, and N345. D537 (nucleophile) is an active-site residue. Residue E540 is part of the active site. D614 acts as the Proton donor in catalysis. 6 N-linked (GlcNAc...) asparagine glycosylation sites follow: N783, N791, N867, N880, N907, and N941.

It belongs to the glycosyl hydrolase 31 family. Heterodimer of a catalytic subunit alpha (ROT2) and a subunit beta (GTB1).

It is found in the endoplasmic reticulum. It catalyses the reaction N(4)-(alpha-D-Glc-(1-&gt;3)-alpha-D-Man-(1-&gt;2)-alpha-D-Man-(1-&gt;2)-alpha-D-Man-(1-&gt;3)-[alpha-D-Man-(1-&gt;2)-alpha-D-Man-(1-&gt;3)-[alpha-D-Man-(1-&gt;2)-alpha-D-Man-(1-&gt;6)]-alpha-D-Man-(1-&gt;6)]-beta-D-Man-(1-&gt;4)-beta-D-GlcNAc-(1-&gt;4)-beta-D-GlcNAc)-L-asparaginyl-[protein] + H2O = N(4)-(alpha-D-Man-(1-&gt;2)-alpha-D-Man-(1-&gt;2)-alpha-D-Man-(1-&gt;3)-[alpha-D-Man-(1-&gt;2)-alpha-D-Man-(1-&gt;3)-[alpha-D-Man-(1-&gt;2)-alpha-D-Man-(1-&gt;6)]-alpha-D-Man-(1-&gt;6)]-beta-D-Man-(1-&gt;4)-beta-D-GlcNAc-(1-&gt;4)-beta-D-GlcNAc)-L-asparaginyl-[protein] (N-glucan mannose isomer 9A1,2,3B1,2,3) + beta-D-glucose. The enzyme catalyses N(4)-(alpha-D-Glc-(1-&gt;3)-alpha-D-Glc-(1-&gt;3)-alpha-D-Man-(1-&gt;2)-alpha-D-Man-(1-&gt;2)-alpha-D-Man-(1-&gt;3)-[alpha-D-Man-(1-&gt;2)-alpha-D-Man-(1-&gt;3)-[alpha-D-Man-(1-&gt;2)-alpha-D-Man-(1-&gt;6)]-alpha-D-Man-(1-&gt;6)]-beta-D-Man-(1-&gt;4)-beta-D-GlcNAc-(1-&gt;4)-beta-D-GlcNAc)-L-asparaginyl-[protein] + H2O = N(4)-(alpha-D-Glc-(1-&gt;3)-alpha-D-Man-(1-&gt;2)-alpha-D-Man-(1-&gt;2)-alpha-D-Man-(1-&gt;3)-[alpha-D-Man-(1-&gt;2)-alpha-D-Man-(1-&gt;3)-[alpha-D-Man-(1-&gt;2)-alpha-D-Man-(1-&gt;6)]-alpha-D-Man-(1-&gt;6)]-beta-D-Man-(1-&gt;4)-beta-D-GlcNAc-(1-&gt;4)-beta-D-GlcNAc)-L-asparaginyl-[protein] + beta-D-glucose. Its pathway is glycan metabolism; N-glycan metabolism. Inhibited by glucose, maltose and nigerose, and by the antibiotic deoxynojirimycin. In terms of biological role, catalytic subunit of glucosidase 2, which cleaves sequentially the 2 innermost alpha-1,3-linked glucose residues from the Glc(2)Man(9)GlcNAc(2) oligosaccharide precursor of immature glycoproteins. This is Glucosidase 2 subunit alpha (ROT2) from Saccharomyces cerevisiae (strain ATCC 204508 / S288c) (Baker's yeast).